The following is a 415-amino-acid chain: Serine--tRNA ligase (415 aa).

231–233 (TAE) is an L-serine binding site. Residue 262–264 (RSE) participates in ATP binding. Glu285 provides a ligand contact to L-serine. An ATP-binding site is contributed by 349–352 (EISS). Position 383 (Ser383) interacts with L-serine.

The protein belongs to the class-II aminoacyl-tRNA synthetase family. Type-1 seryl-tRNA synthetase subfamily. In terms of assembly, homodimer. The tRNA molecule binds across the dimer.

It localises to the cytoplasm. It carries out the reaction tRNA(Ser) + L-serine + ATP = L-seryl-tRNA(Ser) + AMP + diphosphate + H(+). The catalysed reaction is tRNA(Sec) + L-serine + ATP = L-seryl-tRNA(Sec) + AMP + diphosphate + H(+). It functions in the pathway aminoacyl-tRNA biosynthesis; selenocysteinyl-tRNA(Sec) biosynthesis; L-seryl-tRNA(Sec) from L-serine and tRNA(Sec): step 1/1. Functionally, catalyzes the attachment of serine to tRNA(Ser). Is also able to aminoacylate tRNA(Sec) with serine, to form the misacylated tRNA L-seryl-tRNA(Sec), which will be further converted into selenocysteinyl-tRNA(Sec). The polypeptide is Serine--tRNA ligase (Helicobacter pylori (strain HPAG1)).